Here is a 211-residue protein sequence, read N- to C-terminus: LexA repressor (211 aa).

The H-T-H motif DNA-binding region spans 27–47 (QTEIARAFGFKGVRAVQHHLD). Residues serine 131 and lysine 168 each act as for autocatalytic cleavage activity in the active site.

The protein belongs to the peptidase S24 family. Homodimer.

It catalyses the reaction Hydrolysis of Ala-|-Gly bond in repressor LexA.. In terms of biological role, represses a number of genes involved in the response to DNA damage (SOS response), including recA and lexA. In the presence of single-stranded DNA, RecA interacts with LexA causing an autocatalytic cleavage which disrupts the DNA-binding part of LexA, leading to derepression of the SOS regulon and eventually DNA repair. This is LexA repressor from Xylella fastidiosa (strain M23).